A 342-amino-acid polypeptide reads, in one-letter code: Signal-regulatory protein beta-2 (342 aa).

The N-terminal stretch at 1–32 (MCSTMSAPTCLAHLPPCFLLLALVLVPSDASG) is a signal peptide. 2 Ig-like V-type domains span residues 33-143 (QSSR…KSDE) and 157-258 (PDLW…SGQG). The Extracellular segment spans residues 33–287 (QSSRNDWQVL…EPATEMSPTG (255 aa)). A disulfide bridge links cysteine 60 with cysteine 127. Residues asparagine 116, asparagine 179, and asparagine 231 are each glycosylated (N-linked (GlcNAc...) asparagine). An intrachain disulfide couples cysteine 180 to cysteine 242. The chain crosses the membrane as a helical span at residues 288 to 308 (LLVVFAPVVLGLKAITLAALL). At 309 to 342 (LALATSRRSPGQEDVKTTGPAGAMNTLAWSKGQE) the chain is on the cytoplasmic side. Positions 317–342 (SPGQEDVKTTGPAGAMNTLAWSKGQE) are disordered.

The protein localises to the membrane. The chain is Signal-regulatory protein beta-2 (SIRPB2) from Homo sapiens (Human).